We begin with the raw amino-acid sequence, 407 residues long: D-3-phosphoglycerate dehydrogenase (407 aa).

NAD(+) contacts are provided by residues 161-162 (HI), Asp181, 238-240 (ASR), and Asp264. The active site involves Arg240. Residue Glu269 is part of the active site. His292 (proton donor) is an active-site residue. NAD(+) is bound at residue 292 to 295 (HIGG). The ACT domain maps to 340-407 (RILNIHNNKP…PNSIKTRVLY (68 aa)).

It belongs to the D-isomer specific 2-hydroxyacid dehydrogenase family.

The catalysed reaction is (2R)-3-phosphoglycerate + NAD(+) = 3-phosphooxypyruvate + NADH + H(+). It catalyses the reaction (R)-2-hydroxyglutarate + NAD(+) = 2-oxoglutarate + NADH + H(+). It participates in amino-acid biosynthesis; L-serine biosynthesis; L-serine from 3-phospho-D-glycerate: step 1/3. In terms of biological role, catalyzes the reversible oxidation of 3-phospho-D-glycerate to 3-phosphonooxypyruvate, the first step of the phosphorylated L-serine biosynthesis pathway. Also catalyzes the reversible oxidation of 2-hydroxyglutarate to 2-oxoglutarate. The sequence is that of D-3-phosphoglycerate dehydrogenase (serA) from Dictyostelium discoideum (Social amoeba).